Reading from the N-terminus, the 101-residue chain is uncharacterized protein (101 aa).

The next 3 membrane-spanning stretches (helical) occupy residues F10–Y32, L45–I67, and I77–H99.

It localises to the cell membrane. This is an uncharacterized protein from Bacillus subtilis (strain 168).